A 64-amino-acid chain; its full sequence is Protein DsrB (64 aa).

It belongs to the DsrB family.

This is Protein DsrB from Salmonella arizonae (strain ATCC BAA-731 / CDC346-86 / RSK2980).